Reading from the N-terminus, the 316-residue chain is Beta-ketoacyl-[acyl-carrier-protein] synthase III (316 aa).

Active-site residues include cysteine 112 and histidine 243. An ACP-binding region spans residues 244–248 (QANIR). Residue asparagine 273 is part of the active site.

This sequence belongs to the thiolase-like superfamily. FabH family. In terms of assembly, homodimer.

It localises to the cytoplasm. It catalyses the reaction malonyl-[ACP] + acetyl-CoA + H(+) = 3-oxobutanoyl-[ACP] + CO2 + CoA. It functions in the pathway lipid metabolism; fatty acid biosynthesis. Its function is as follows. Catalyzes the condensation reaction of fatty acid synthesis by the addition to an acyl acceptor of two carbons from malonyl-ACP. Catalyzes the first condensation reaction which initiates fatty acid synthesis and may therefore play a role in governing the total rate of fatty acid production. Possesses both acetoacetyl-ACP synthase and acetyl transacylase activities. Its substrate specificity determines the biosynthesis of branched-chain and/or straight-chain of fatty acids. The sequence is that of Beta-ketoacyl-[acyl-carrier-protein] synthase III from Haemophilus ducreyi (strain 35000HP / ATCC 700724).